A 257-amino-acid polypeptide reads, in one-letter code: uncharacterized protein (257 aa).

Helical transmembrane passes span 23–43 (VLTDPVSWGLIGSLVVLEGLL), 79–99 (FIFIGLGMLLIKFWWIKVLGA), 131–151 (TFGIFWATVISVELMDLAFSV), 158–178 (FAVSEKVWVLLIGGMLGILMM), 199–219 (AFVLIGIIALKMAGSAFHYEM), and 221–241 (HSVFFIIIIAAFAVTLIIHYI).

Belongs to the TerC family.

The protein localises to the cell membrane. This is an uncharacterized protein from Bacillus subtilis (strain 168).